The chain runs to 277 residues: uncharacterized protein (277 aa).

Residues 139-167 form an SWIM-type zinc finger; sequence TARELSLDCSCPDYAVPCKHLAATFYLLA.

This is an uncharacterized protein from Mycobacterium tuberculosis (strain ATCC 25618 / H37Rv).